Consider the following 245-residue polypeptide: Carboxy-S-adenosyl-L-methionine synthase (245 aa).

Residues Y42, 67 to 69, 92 to 93, 120 to 121, N135, and R202 contribute to the S-adenosyl-L-methionine site; these read GCS, DN, and DI.

Belongs to the class I-like SAM-binding methyltransferase superfamily. Cx-SAM synthase family. As to quaternary structure, homodimer.

The enzyme catalyses prephenate + S-adenosyl-L-methionine = carboxy-S-adenosyl-L-methionine + 3-phenylpyruvate + H2O. Its function is as follows. Catalyzes the conversion of S-adenosyl-L-methionine (SAM) to carboxy-S-adenosyl-L-methionine (Cx-SAM). The protein is Carboxy-S-adenosyl-L-methionine synthase of Vibrio vulnificus (strain YJ016).